The chain runs to 623 residues: Procollagen galactosyltransferase 1 (623 aa).

The signal sequence occupies residues 1-30 (MAAAPRACKGHGRPLPVLLLLLLLALPPLG). N-linked (GlcNAc...) asparagine glycans are attached at residues N97, N185, and N382. The segment covering 589 to 607 (RAKSQKMREQQALSREAKN) has biased composition (basic and acidic residues). The interval 589 to 623 (RAKSQKMREQQALSREAKNSDVLQSPLDSAARDEL) is disordered. The Prevents secretion from ER motif lies at 620–623 (RDEL).

This sequence belongs to the glycosyltransferase 25 family. In terms of processing, N-glycosylated.

The protein localises to the endoplasmic reticulum lumen. The enzyme catalyses (5R)-5-hydroxy-L-lysyl-[collagen] + UDP-alpha-D-galactose = (5R)-5-O-(beta-D-galactosyl)-5-hydroxy-L-lysyl-[collagen] + UDP + H(+). Its function is as follows. Beta-galactosyltransferase that transfers beta-galactose to hydroxylysine residues of type I collagen. By acting on collagen glycosylation, facilitates the formation of collagen triple helix. Also involved in the biosynthesis of collagen type IV. This Bos taurus (Bovine) protein is Procollagen galactosyltransferase 1 (COLGALT1).